A 147-amino-acid chain; its full sequence is Lysozyme C (147 aa).

The first 17 residues, 1–17 (MRSLLILVLCFLPLAAP), serve as a signal peptide directing secretion. The C-type lysozyme domain maps to 19-147 (KVYGRCELAA…VNVWIRGCRL (129 aa)). Intrachain disulfides connect cysteine 24–cysteine 145, cysteine 48–cysteine 133, cysteine 82–cysteine 98, and cysteine 94–cysteine 112. Residues glutamate 53 and aspartate 70 contribute to the active site.

This sequence belongs to the glycosyl hydrolase 22 family. As to quaternary structure, monomer. In terms of processing, by an evolutionary shift in the site of proteolytic cleavage of prelysozyme, Gly-18 became the N-terminal residue of the mature protein instead of being the C-terminal residue of the signal sequence as in other birds.

It localises to the secreted. The enzyme catalyses Hydrolysis of (1-&gt;4)-beta-linkages between N-acetylmuramic acid and N-acetyl-D-glucosamine residues in a peptidoglycan and between N-acetyl-D-glucosamine residues in chitodextrins.. In terms of biological role, lysozymes have primarily a bacteriolytic function; those in tissues and body fluids are associated with the monocyte-macrophage system and enhance the activity of immunoagents. This Phasianus colchicus colchicus (Black-necked pheasant) protein is Lysozyme C (LYZ).